We begin with the raw amino-acid sequence, 271 residues long: Protein ABHD14A (271 aa).

Residues 35–55 form a helical; Signal-anchor for type II membrane protein membrane-spanning segment; that stretch reads VALLGLSLLLMLLLYVGLPGP. An N-linked (GlcNAc...) asparagine glycan is attached at Asn-67. The active-site Charge relay system is the Ser-171. The N-linked (GlcNAc...) asparagine glycan is linked to Asn-201. Residues Asp-222 and His-249 each act as charge relay system in the active site.

Belongs to the AB hydrolase superfamily. ABHD14 family.

Its subcellular location is the cytoplasm. It localises to the membrane. Possible role in granule neuron development. This Homo sapiens (Human) protein is Protein ABHD14A.